A 351-amino-acid polypeptide reads, in one-letter code: Flagellin (351 aa).

Belongs to the bacterial flagellin family.

Its subcellular location is the secreted. It is found in the bacterial flagellum. Functionally, flagellin is the subunit protein which polymerizes to form the filaments of bacterial flagella. The sequence is that of Flagellin (fliC) from Serratia marcescens.